A 255-amino-acid chain; its full sequence is Tabinhibitin 7 (255 aa).

The N-terminal stretch at 1 to 23 (MTSILVSSFLLATLVLQYATIDA) is a signal peptide. A Cell attachment site motif is present at residues 32–34 (RGD). The SCP domain maps to 67–211 (LSKINDVRDH…KARALLTCNF (145 aa)).

The protein belongs to the CRISP family. As to expression, expressed in salivary glands.

The protein resides in the secreted. Functionally, inhibits platelet aggregation induced by all agonists tested (ADP, arachidonic acid, the thromboxane A2 analog U46619, thrombin, and snake venom snaclecs (TMVA that activates platelet through GPIB, and stejnulxin that specifically acts through GPVI (GP6))). May act by competing with fibrinogen for binding to glycoprotein IIb/IIIa (ITGA2B/ITGB3). This Tabanus yao (Horsefly) protein is Tabinhibitin 7.